Here is a 366-residue protein sequence, read N- to C-terminus: Anthranilate phosphoribosyltransferase (366 aa).

5-phospho-alpha-D-ribose 1-diphosphate is bound by residues glycine 103, 106–107 (GD), threonine 111, 113–116 (NLST), 131–139 (KHGNRASSS), and glycine 143. Glycine 103 serves as a coordination point for anthranilate. Serine 115 lines the Mg(2+) pocket. Anthranilate is bound at residue asparagine 134. An anthranilate-binding site is contributed by arginine 189. 2 residues coordinate Mg(2+): aspartate 247 and glutamate 248.

It belongs to the anthranilate phosphoribosyltransferase family. Homodimer. Requires Mg(2+) as cofactor.

The catalysed reaction is N-(5-phospho-beta-D-ribosyl)anthranilate + diphosphate = 5-phospho-alpha-D-ribose 1-diphosphate + anthranilate. Its pathway is amino-acid biosynthesis; L-tryptophan biosynthesis; L-tryptophan from chorismate: step 2/5. In terms of biological role, catalyzes the transfer of the phosphoribosyl group of 5-phosphorylribose-1-pyrophosphate (PRPP) to anthranilate to yield N-(5'-phosphoribosyl)-anthranilate (PRA). The polypeptide is Anthranilate phosphoribosyltransferase (Mycobacterium leprae (strain Br4923)).